A 307-amino-acid chain; its full sequence is MAGGFLSMANPAVTLSGVAGNIISFLVFLAPVATFLQVYKKKSTGGYSSVPYVVALFSSVLWIFYALVKTNSRPLLTINAFGCGVEAAYIVLYLVYAPRRARLRTLAFFLLLDVAAFALIVVTTLYLVPKPHQVKFLGSVCLAFSMAVFVAPLSIIFKVIKTKSVEFMPIGLSVCLTLSAVAWFCYGLFTKDPYVMYPNVGGFFFSCVQMGLYFWYRKPRNTAVLPTTSDSMSPISAAAAATQRVIELPAGTHAFTILSVSPIPILGVHKVEVVAAEQAADGVAAAAAADKELLQNKPEVIEITAAV.

The Extracellular portion of the chain corresponds to 1-14 (MAGGFLSMANPAVT). Residues 15 to 35 (LSGVAGNIISFLVFLAPVATF) form a helical membrane-spanning segment. One can recognise a MtN3/slv 1 domain in the interval 17-100 (GVAGNIISFL…VLYLVYAPRR (84 aa)). The Cytoplasmic segment spans residues 36–47 (LQVYKKKSTGGY). A helical membrane pass occupies residues 48 to 68 (SSVPYVVALFSSVLWIFYALV). The Extracellular segment spans residues 69-74 (KTNSRP). A helical transmembrane segment spans residues 75–95 (LLTINAFGCGVEAAYIVLYLV). Topologically, residues 96 to 107 (YAPRRARLRTLA) are cytoplasmic. Residues 108–128 (FFLLLDVAAFALIVVTTLYLV) traverse the membrane as a helical segment. At 129-135 (PKPHQVK) the chain is on the extracellular side. The chain crosses the membrane as a helical span at residues 136–156 (FLGSVCLAFSMAVFVAPLSII). Positions 136-219 (FLGSVCLAFS…MGLYFWYRKP (84 aa)) constitute a MtN3/slv 2 domain. The Cytoplasmic segment spans residues 157 to 168 (FKVIKTKSVEFM). A helical transmembrane segment spans residues 169-189 (PIGLSVCLTLSAVAWFCYGLF). Topologically, residues 190-194 (TKDPY) are extracellular. Residues 195–215 (VMYPNVGGFFFSCVQMGLYFW) traverse the membrane as a helical segment. At 216–307 (YRKPRNTAVL…PEVIEITAAV (92 aa)) the chain is on the cytoplasmic side.

It belongs to the SWEET sugar transporter family. Interacts with COPT1 and COPT2. Interacts with APX8. In terms of tissue distribution, mostly expressed in panicles and anthers. Also detected in leaves (leaf collar, leaf auricle, leaf ligule), roots, sheaths, culms and culm nodes.

The protein resides in the cell membrane. Its function is as follows. Mediates both low-affinity uptake and efflux of sugar across the plasma membrane. Required for pollen viability. Involved in the transport of copper, in cooperation with COPT1 and COPT2. In terms of biological role, confers sensitivity to bacterial blight mediated by X.oryzae pv. oryzae (Xoo) in its Xa13 allelic form (e.g. cv. IR24), probably by providing the sugar required for the pathogen growth, or by reducing copper contents in xylem. However, a recessive resistance can be associated with the xa13 allele (in which the promoter is mutated leading to reduced induction upon pathogen infection, e.g. cv. IRBB13), specifically toward Xoo Philippine race 6 and Indian race PXO8. The polypeptide is Bidirectional sugar transporter SWEET11 (SWEET11) (Oryza sativa subsp. japonica (Rice)).